The sequence spans 338 residues: Aspartate-semialdehyde dehydrogenase (338 aa).

NADP(+) is bound by residues 13–16 (TGNV) and 41–42 (NS). Arginine 101 is a phosphate binding site. Catalysis depends on cysteine 132, which acts as the Acyl-thioester intermediate. Position 159 (glutamine 159) interacts with substrate. Residue 162–163 (SG) coordinates NADP(+). Lysine 216 provides a ligand contact to phosphate. A substrate-binding site is contributed by arginine 237. Catalysis depends on histidine 244, which acts as the Proton acceptor. Residue asparagine 317 coordinates NADP(+).

It belongs to the aspartate-semialdehyde dehydrogenase family. Homodimer.

The enzyme catalyses L-aspartate 4-semialdehyde + phosphate + NADP(+) = 4-phospho-L-aspartate + NADPH + H(+). Its pathway is amino-acid biosynthesis; L-lysine biosynthesis via DAP pathway; (S)-tetrahydrodipicolinate from L-aspartate: step 2/4. It participates in amino-acid biosynthesis; L-methionine biosynthesis via de novo pathway; L-homoserine from L-aspartate: step 2/3. It functions in the pathway amino-acid biosynthesis; L-threonine biosynthesis; L-threonine from L-aspartate: step 2/5. Catalyzes the NADPH-dependent formation of L-aspartate-semialdehyde (L-ASA) by the reductive dephosphorylation of L-aspartyl-4-phosphate. This is Aspartate-semialdehyde dehydrogenase from Rickettsia bellii (strain RML369-C).